Here is a 543-residue protein sequence, read N- to C-terminus: Chaperonin GroEL (543 aa).

Residues 29 to 32 (TLGP), 86 to 90 (DGTTT), G413, 477 to 479 (DAL), and D493 contribute to the ATP site. A disordered region spans residues 524 to 543 (EKDKPEMPGGAPGMGMGGMY). The span at 533-543 (GAPGMGMGGMY) shows a compositional bias: gly residues.

It belongs to the chaperonin (HSP60) family. Forms a cylinder of 14 subunits composed of two heptameric rings stacked back-to-back. Interacts with the co-chaperonin GroES.

The protein resides in the cytoplasm. The catalysed reaction is ATP + H2O + a folded polypeptide = ADP + phosphate + an unfolded polypeptide.. In terms of biological role, together with its co-chaperonin GroES, plays an essential role in assisting protein folding. The GroEL-GroES system forms a nano-cage that allows encapsulation of the non-native substrate proteins and provides a physical environment optimized to promote and accelerate protein folding. This is Chaperonin GroEL from Clostridium acetobutylicum (strain ATCC 824 / DSM 792 / JCM 1419 / IAM 19013 / LMG 5710 / NBRC 13948 / NRRL B-527 / VKM B-1787 / 2291 / W).